Consider the following 510-residue polypeptide: Glutamate decarboxylase (510 aa).

107–109 (QLS) lines the substrate pocket. Lysine 322 bears the N6-(pyridoxal phosphate)lysine mark. Position 483 (arginine 483) interacts with substrate.

The protein belongs to the group II decarboxylase family. As to quaternary structure, homodimer. Pyridoxal 5'-phosphate serves as cofactor. Expressed in the head (at protein level).

It carries out the reaction L-glutamate + H(+) = 4-aminobutanoate + CO2. In terms of biological role, catalyzes the production of GABA. This Drosophila melanogaster (Fruit fly) protein is Glutamate decarboxylase (Gad1).